Here is a 223-residue protein sequence, read N- to C-terminus: Neurotrophic factor BDNF precursor form (223 aa).

The signal sequence occupies residues 1–5; the sequence is SCMKA. Residues 6-114 constitute a propeptide that is removed on maturation; that stretch reads APMKEASIRG…AANMSMRVRR (109 aa). Asn-107 is a glycosylation site (N-linked (GlcNAc...) asparagine). 2 disulfide bridges follow: Cys-127–Cys-194 and Cys-172–Cys-223.

The protein belongs to the NGF-beta family.

Its subcellular location is the secreted. Functionally, promotes the survival of neuronal populations that are all located either in the central nervous system or directly connected to it. This chain is Neurotrophic factor BDNF precursor form (BDNF), found in Tropidophis haetianus (Haitian dwarf boa).